The chain runs to 452 residues: Phosphoglucosamine mutase (452 aa).

Ser-104 functions as the Phosphoserine intermediate in the catalytic mechanism. Residues Ser-104, Asp-245, Asp-247, and Asp-249 each contribute to the Mg(2+) site. Ser-104 carries the phosphoserine modification.

The protein belongs to the phosphohexose mutase family. The cofactor is Mg(2+). In terms of processing, activated by phosphorylation.

It catalyses the reaction alpha-D-glucosamine 1-phosphate = D-glucosamine 6-phosphate. In terms of biological role, catalyzes the conversion of glucosamine-6-phosphate to glucosamine-1-phosphate. The chain is Phosphoglucosamine mutase from Gluconacetobacter diazotrophicus (strain ATCC 49037 / DSM 5601 / CCUG 37298 / CIP 103539 / LMG 7603 / PAl5).